Consider the following 36-residue polypeptide: Potassium channel toxin alpha-KTx 16.5 (36 aa).

Disulfide bonds link Cys-7/Cys-28, Cys-13/Cys-33, and Cys-17/Cys-35. An interaction with Ca(2+)-activated K(+) channels region spans residues 26-33 (GKCQNKQC).

This sequence belongs to the short scorpion toxin superfamily. Potassium channel inhibitor family. Alpha-KTx 16 subfamily. Expressed by the venom gland.

The protein localises to the secreted. Functionally, augments responses to direct muscle stimulation probably by blocking calcium-activated potassium channels. In Leiurus hebraeus (Hebrew deathstalker scorpion), this protein is Potassium channel toxin alpha-KTx 16.5.